The following is a 233-amino-acid chain: Homeobox protein Hox-B6b (233 aa).

Residues 136 to 141 (IYPWMQ) carry the Antp-type hexapeptide motif. Residues 155 to 214 (GRRGRQTYTRYQTLELEKEFHFNRYLTRRRRIEISHALCLTERQIKIWFQNRRMKWKKEN) constitute a DNA-binding region (homeobox). The tract at residues 213 to 233 (ENKLLNPSKTPEEEEEAEKKS) is disordered. Residues 224–233 (EEEEEAEKKS) are compositionally biased toward acidic residues.

Belongs to the Antp homeobox family.

Its subcellular location is the nucleus. Sequence-specific transcription factor which is part of a developmental regulatory system that provides cells with specific positional identities on the anterior-posterior axis. In Takifugu rubripes (Japanese pufferfish), this protein is Homeobox protein Hox-B6b (hoxb6b).